We begin with the raw amino-acid sequence, 247 residues long: Probable transcriptional regulatory protein BHWA1_01533 (247 aa).

The disordered stretch occupies residues 1–22 (MSGHSKWASIKHKKAANDSKKG).

The protein belongs to the TACO1 family.

The protein resides in the cytoplasm. The chain is Probable transcriptional regulatory protein BHWA1_01533 from Brachyspira hyodysenteriae (strain ATCC 49526 / WA1).